A 678-amino-acid polypeptide reads, in one-letter code: Elongation factor G 2 (678 aa).

The 275-residue stretch at 4 to 278 (QKLRNIGIIA…AVVDYLPSPQ (275 aa)) folds into the tr-type G domain. Residues 13 to 20 (AHVDAGKT), 77 to 81 (DTPGH), and 131 to 134 (NKMD) each bind GTP.

The protein belongs to the TRAFAC class translation factor GTPase superfamily. Classic translation factor GTPase family. EF-G/EF-2 subfamily.

It is found in the cytoplasm. In terms of biological role, catalyzes the GTP-dependent ribosomal translocation step during translation elongation. During this step, the ribosome changes from the pre-translocational (PRE) to the post-translocational (POST) state as the newly formed A-site-bound peptidyl-tRNA and P-site-bound deacylated tRNA move to the P and E sites, respectively. Catalyzes the coordinated movement of the two tRNA molecules, the mRNA and conformational changes in the ribosome. This chain is Elongation factor G 2, found in Hahella chejuensis (strain KCTC 2396).